Reading from the N-terminus, the 1966-residue chain is Histone-lysine N-methyltransferase SETD1B (1966 aa).

Positions 1–12 are enriched in basic residues; that stretch reads MENSHPPHHHHQ. The disordered stretch occupies residues 1–26; that stretch reads MENSHPPHHHHQQPPPQPGPSGERRN. The interval 68-98 is interaction with WDR82; it reads VEDPRVVGIWTKNKELELSVPKFKIDEFYVG. An RRM domain is found at 93 to 181; it reads DEFYVGPVPP…NIIHVELDTK (89 aa). Disordered regions lie at residues 235–302, 357–660, 675–719, 963–1462, 1501–1541, 1555–1606, and 1636–1668; these read GCGS…LFSQ, VGGT…PKPM, LAPT…PPPA, KVKR…SGPL, PPLL…RPPA, QPQT…KLPF, and AKSR…PQPL. 3 stretches are compositionally biased toward polar residues: residues 243–259, 265–274, and 282–300; these read VTPN…TAYS, TPNSYGQGTP, and PFSQ…SYLF. Pro residues-rich tracts occupy residues 432–441 and 449–458; these read PAPPPLPPAE and GTPPGPPPPD. Over residues 493 to 521 the composition is skewed to basic and acidic residues; that stretch reads EKPHDSLDSRIEMLLKEQRTKLLFLREPD. Positions 531-543 are enriched in low complexity; the sequence is SPISSSSSQLSPL. Residues 592 to 603 are compositionally biased toward pro residues; the sequence is PRPPPEPGPPDP. A compositionally biased stretch (acidic residues) spans 637–646; it reads EDMEISDDEM. A compositionally biased stretch (pro residues) spans 679-719; it reads LPLPPPPGFPPLPPPPPPPPPQPGFPMPPPLPPPPPPPPPA. Ser986 and Ser994 each carry phosphoserine. Residues 995 to 1015 are compositionally biased toward basic and acidic residues; sequence ERERDRDMADTPCELAKRDPK. The residue at position 1031 (Ser1031) is a Phosphoserine. Positions 1041–1064 are enriched in low complexity; the sequence is LSASSSSSASSSSGSSTTSPSSSA. 2 stretches are compositionally biased toward acidic residues: residues 1067–1087 and 1104–1142; these read KEEE…EEEE and KDDD…EEET. Residues 1148–1174 show a composition bias toward low complexity; the sequence is SKAEATSSSESSESSEFESSSESSPSS. Residues 1173–1204 are a coiled coil; sequence SSSEDEEEVVAREEEEEEEEEEMVAEESMASA. Acidic residues-rich tracts occupy residues 1175–1197 and 1229–1238; these read SEDE…EMVA and GMEEEVDIET. Phosphoserine occurs at positions 1265, 1283, and 1335. Residues 1312-1340 are compositionally biased toward pro residues; it reads EPPMMLPLPLQPPLPPPRPPRPPSPPPEP. Residues 1383 to 1425 show a composition bias toward low complexity; the sequence is PGGEPPLSGGSSGLSLSSPQVPGSPFSYPAPSPSLSSGGLPRT. Residues 1501–1514 are compositionally biased toward pro residues; it reads PPLLPAPLASCPPP. Residues 1515 to 1524 are compositionally biased toward basic residues; sequence MKRKPGRPRR. A compositionally biased stretch (pro residues) spans 1580 to 1600; that stretch reads PAPPPPLPPQPPPPPPPPPVE. Ser1659 and Ser1663 each carry phosphoserine. A WDR5 interaction motif (WIN) motif is present at residues 1745–1750; it reads GCARSE. Residues 1767-1800 are disordered; the sequence is SRASTDEPPADTQGMSIPAQPHASTRAGSERRSE. The RxxxRR motif signature appears at 1798–1803; sequence RSEQRR. The SET domain maps to 1827–1944; sequence KKLKFCKSHI…VNEEITYDYK (118 aa). Residue Tyr1943 coordinates S-adenosyl-L-methionine. A Post-SET domain is found at 1950 to 1966; the sequence is VKIPCLCGSENCRGTLN.

This sequence belongs to the class V-like SAM-binding methyltransferase superfamily. As to quaternary structure, component of the SET1B/COMPASS complex composed of the catalytic subunit SETD1B, WDR5, WDR82, RBBP5, ASH2L/ASH2, CXXC1/CFP1, HCFC1, DPY30 homotrimer and BOD1. Forms a core complex with the evolutionary conserved subcomplex WRAD composed of WDR5, RBBP5, ASH2L/ASH2 and DPY30 subunits; WRAD differentially stimulates the methyltransferase activity. Interacts with HCFC1 and ASH2L/ASH2. Interacts (via N-terminal region) with WDR82. Interacts (via the RRM domain) with hyperphosphorylated C-terminal domain (CTD) of RNA polymerase II large subunit (POLR2A) only in the presence of WDR82. Binds specifically to CTD heptad repeats phosphorylated on 'Ser-5' of each heptad. Interacts with RBM15. Interacts (via WIN motif) with WDR5.

The protein localises to the nucleus. It localises to the nucleus speckle. Its subcellular location is the chromosome. It is found in the cytoplasm. It catalyses the reaction L-lysyl(4)-[histone H3] + S-adenosyl-L-methionine = N(6)-methyl-L-lysyl(4)-[histone H3] + S-adenosyl-L-homocysteine + H(+). The enzyme catalyses N(6)-methyl-L-lysyl(4)-[histone H3] + S-adenosyl-L-methionine = N(6),N(6)-dimethyl-L-lysyl(4)-[histone H3] + S-adenosyl-L-homocysteine + H(+). The catalysed reaction is N(6),N(6)-dimethyl-L-lysyl(4)-[histone H3] + S-adenosyl-L-methionine = N(6),N(6),N(6)-trimethyl-L-lysyl(4)-[histone H3] + S-adenosyl-L-homocysteine + H(+). Its function is as follows. Histone methyltransferase that catalyzes methyl group transfer from S-adenosyl-L-methionine to the epsilon-amino group of 'Lys-4' of histone H3 (H3K4) via a non-processive mechanism. Part of chromatin remodeling machinery, forms H3K4me1, H3K4me2 and H3K4me3 methylation marks at active chromatin sites where transcription and DNA repair take place. Plays an essential role in regulating the transcriptional programming of multipotent hematopoietic progenitor cells and lymphoid lineage specification during hematopoiesis. In Homo sapiens (Human), this protein is Histone-lysine N-methyltransferase SETD1B (SETD1B).